Consider the following 402-residue polypeptide: Protochlorophyllide reductase B, chloroplastic (402 aa).

Belongs to the short-chain dehydrogenases/reductases (SDR) family. POR subfamily.

It localises to the plastid. Its subcellular location is the chloroplast. It catalyses the reaction chlorophyllide a + NADP(+) = protochlorophyllide a + NADPH + H(+). It participates in porphyrin-containing compound metabolism; chlorophyll biosynthesis. In terms of biological role, phototransformation of protochlorophyllide (Pchlide) to chlorophyllide (Chlide). This is Protochlorophyllide reductase B, chloroplastic (PORB) from Oryza sativa subsp. japonica (Rice).